Consider the following 235-residue polypeptide: Sugar fermentation stimulation protein homolog (235 aa).

It belongs to the SfsA family.

The chain is Sugar fermentation stimulation protein homolog from Ectopseudomonas mendocina (strain ymp) (Pseudomonas mendocina).